A 1572-amino-acid polypeptide reads, in one-letter code: E3 ubiquitin-protein ligase HECW2 (1572 aa).

Phosphoserine is present on S48. A C2 domain is found at 167 to 301; sequence GAEGMEGGAS…QAIGDQMLSY (135 aa). Disordered regions lie at residues 341–452 and 489–796; these read VNSV…SSFP and IMFS…PSVR. Low complexity predominate over residues 400–410; sequence TSTSSRTSPPR. Basic and acidic residues predominate over residues 518 to 532; that stretch reads ASTHEAASFEDKPEN. Polar residues-rich tracts occupy residues 572 to 588, 597 to 614, 643 to 664, and 688 to 703; these read EVDQ…SDAS, ETES…SSET, SSCN…SSLE, and PTSS…SVCT. Residues 737 to 1068 form an interaction with TP73 region; that stretch reads WQRRGSLEGA…PRPSSTFNTV (332 aa). Low complexity predominate over residues 744 to 776; that stretch reads EGAAAAAESPPQEEGSAGEAQGTCEGATAQEEG. One can recognise a WW 1 domain in the interval 807 to 840; the sequence is EALPPNWEARIDSHGRIFYVDHVNRTTTWQRPTA. Residues 847 to 874 adopt a coiled-coil conformation; sequence LQRSNSIQQMEQLNRRYQSIRRTMTNER. 2 positions are modified to phosphoserine: S852 and S909. Residues 985-1018 form the WW 2 domain; it reads LELPRGWEMKHDHQGKAFFVDHNSRTTTFIDPRL. Disordered stretches follow at residues 1024–1069 and 1161–1187; these read RPTS…NTVS and CQSP…RAPA. A compositionally biased stretch (basic residues) spans 1031–1040; the sequence is HRQHLTRQRS. Over residues 1161–1181 the composition is skewed to polar residues; it reads CQSPRGSPVSSPQNSPGTQRA. Phosphoserine is present on S1175. The region spanning 1237 to 1572 is the HECT domain; that stretch reads SRKDLQRNKL…VEETSTFGLE (336 aa). The Glycyl thioester intermediate role is filled by C1540.

In terms of assembly, interacts with TP73. Interacts with FZR1. Post-translationally, ubiquitinated and degraded during mitotic exit by APC/C-Cdh1. In terms of tissue distribution, predominantly expressed in adult brain, lung and heart.

The protein localises to the cytoplasm. It localises to the cytoskeleton. The protein resides in the spindle. It catalyses the reaction S-ubiquitinyl-[E2 ubiquitin-conjugating enzyme]-L-cysteine + [acceptor protein]-L-lysine = [E2 ubiquitin-conjugating enzyme]-L-cysteine + N(6)-ubiquitinyl-[acceptor protein]-L-lysine.. It participates in protein modification; protein ubiquitination. Its function is as follows. E3 ubiquitin-protein ligase that mediates ubiquitination of TP73. Acts to stabilize TP73 and enhance activation of transcription by TP73. Involved in the regulation of mitotic metaphase/anaphase transition. The protein is E3 ubiquitin-protein ligase HECW2 (HECW2) of Homo sapiens (Human).